The following is an 845-amino-acid chain: Putative DEAD-box ATP-dependent RNA helicase 33 (845 aa).

2 disordered regions span residues 129-149 (GHPD…PMSP) and 282-302 (KFRK…NEGK). Acidic residues predominate over residues 289 to 298 (STEEDSDEEG). Residues 375 to 403 (KRFDESCISPLTLKALSASGIVKMTRVQD) carry the Q motif motif. The Helicase ATP-binding domain maps to 406 to 590 (LSECLDGKDA…QLVLKRDHSY (185 aa)). 419-426 (AKTGTGKS) is a binding site for ATP. Positions 538-541 (DEAD) match the DEAD box motif. Positions 624–778 (LLKEHINNMP…QVDQSMAKID (155 aa)) constitute a Helicase C-terminal domain.

The protein belongs to the DEAD box helicase family.

The catalysed reaction is ATP + H2O = ADP + phosphate + H(+). The sequence is that of Putative DEAD-box ATP-dependent RNA helicase 33 (RH33) from Arabidopsis thaliana (Mouse-ear cress).